Here is a 459-residue protein sequence, read N- to C-terminus: Exodeoxyribonuclease 7 large subunit (459 aa).

The protein belongs to the XseA family. Heterooligomer composed of large and small subunits.

The protein resides in the cytoplasm. It catalyses the reaction Exonucleolytic cleavage in either 5'- to 3'- or 3'- to 5'-direction to yield nucleoside 5'-phosphates.. Functionally, bidirectionally degrades single-stranded DNA into large acid-insoluble oligonucleotides, which are then degraded further into small acid-soluble oligonucleotides. The polypeptide is Exodeoxyribonuclease 7 large subunit (Yersinia pseudotuberculosis serotype IB (strain PB1/+)).